We begin with the raw amino-acid sequence, 295 residues long: Acetylglutamate kinase (295 aa).

Residues 70 to 71 (GG), Arg-92, and Asn-191 each bind substrate.

Belongs to the acetylglutamate kinase family. ArgB subfamily.

Its subcellular location is the cytoplasm. It carries out the reaction N-acetyl-L-glutamate + ATP = N-acetyl-L-glutamyl 5-phosphate + ADP. The protein operates within amino-acid biosynthesis; L-arginine biosynthesis; N(2)-acetyl-L-ornithine from L-glutamate: step 2/4. Functionally, catalyzes the ATP-dependent phosphorylation of N-acetyl-L-glutamate. The sequence is that of Acetylglutamate kinase from Mycobacterium avium (strain 104).